The sequence spans 462 residues: MICTRFAPSPTGYLHIGGLRTALFNYLYARANGGKFVLRIEDTDLKRNSVEAANAIVEAFKWCGLDYDGEIVYQSSRFDLYKKYIQKLLDENKAYKCYMSKAELDTLRAEQEARKERPKYDGRYRDFNGIPPKGIDPVIRIKAPLSGTIEFDDGIKGSMKFNANDILDDFIIARSDGTPTYNFTVVIDDALMGITDVIRGDDHLSNTPKQIVLYNALGFKIPKFYHVAMINGSDGRKLSKRHGATDVMEYKRMGYLPEALLNFLVRLGWSHGDDEIFSLDDMKKYFDPNHISKSSSTFNQSKLEWLNAYYIKNSSNKRLIKELKNFNINIENHPKKELLIDSFKERAKTLADMAKGIDSLLSRPKTYEQKAFNKFINENSKNLLQKFSEILDAQNLKAKEIEEKTMQFLEKEGEKLKNLAQPLRVAITGTSVSPSIFEVIEILGVNEIKLRIENLIKNKESL.

The short motif at 8–18 (PSPTGYLHIGG) is the 'HIGH' region element. The short motif at 237 to 241 (KLSKR) is the 'KMSKS' region element. K240 lines the ATP pocket.

Belongs to the class-I aminoacyl-tRNA synthetase family. Glutamate--tRNA ligase type 1 subfamily. Monomer.

Its subcellular location is the cytoplasm. The catalysed reaction is tRNA(Glu) + L-glutamate + ATP = L-glutamyl-tRNA(Glu) + AMP + diphosphate. Its function is as follows. Catalyzes the attachment of glutamate to tRNA(Glu) in a two-step reaction: glutamate is first activated by ATP to form Glu-AMP and then transferred to the acceptor end of tRNA(Glu). This is Glutamate--tRNA ligase 1 from Campylobacter hominis (strain ATCC BAA-381 / DSM 21671 / CCUG 45161 / LMG 19568 / NCTC 13146 / CH001A).